The chain runs to 279 residues: Undecaprenyl-diphosphatase (279 aa).

8 helical membrane passes run 2-22, 44-64, 85-105, 113-133, 163-183, 188-208, 223-243, and 255-275; these read LIIE…TEWL, AFIE…VMLI, WQLW…AVPL, FYFM…FIWI, VLSI…AIIL, TVAA…YSGL, AQVL…LLAI, and FTIF…YSFF.

The protein belongs to the UppP family.

It localises to the cell membrane. It catalyses the reaction di-trans,octa-cis-undecaprenyl diphosphate + H2O = di-trans,octa-cis-undecaprenyl phosphate + phosphate + H(+). Its function is as follows. Catalyzes the dephosphorylation of undecaprenyl diphosphate (UPP). Confers resistance to bacitracin. The chain is Undecaprenyl-diphosphatase from Streptococcus pyogenes serotype M5 (strain Manfredo).